A 114-amino-acid chain; its full sequence is Iron-sulfur cluster insertion protein ErpA (114 aa).

Positions 42, 106, and 108 each coordinate iron-sulfur cluster.

Belongs to the HesB/IscA family. In terms of assembly, homodimer. Iron-sulfur cluster serves as cofactor.

In terms of biological role, required for insertion of 4Fe-4S clusters for at least IspG. This chain is Iron-sulfur cluster insertion protein ErpA, found in Yersinia enterocolitica serotype O:8 / biotype 1B (strain NCTC 13174 / 8081).